A 570-amino-acid chain; its full sequence is Nucleoprotein (570 aa).

Positions 54–241 (MRKQKRDDGD…IDTKKSSLNI (188 aa)) are binding site for the cap structure m7GTP. Mn(2+)-binding residues include Asp390 and Glu392. 4 residues coordinate Zn(2+): Glu400, Cys507, His510, and Cys530. Asp534 is a binding site for Mn(2+).

Belongs to the arenaviridae nucleocapsid protein family. In terms of assembly, homomultimerizes to form the nucleocapsid. Binds to viral genomic RNA. Interacts with glycoprotein G2. Interacts with protein Z; this interaction probably directs the encapsidated genome to budding sites. Interacts with protein L; this interaction does not interfere with Z-L interaction. Interacts with host IKBKE (via Protein kinase domain); the interaction inhibits IKBKE kinase activity.

It localises to the virion. Its subcellular location is the host cytoplasm. In terms of biological role, encapsidates the genome, protecting it from nucleases. The encapsidated genomic RNA is termed the nucleocapsid (NC). Serves as template for viral transcription and replication. The increased presence of protein N in host cell does not seem to trigger the switch from transcription to replication as observed in other negative strain RNA viruses. Through the interaction with host IKBKE, strongly inhibits the phosphorylation and nuclear translocation of host IRF3, a protein involved in interferon activation pathway, leading to the inhibition of interferon-beta and IRF3-dependent promoters activation. Also encodes a functional 3'-5' exoribonuclease that degrades preferentially dsRNA substrates and thereby participates in the suppression of interferon induction. The protein is Nucleoprotein of Homo sapiens (Human).